The chain runs to 217 residues: MOB kinase activator 3A (217 aa).

Residues Cys83, Cys88, His165, and His170 each contribute to the Zn(2+) site.

It belongs to the MOB1/phocein family.

Its function is as follows. May regulate the activity of kinases. In Bos taurus (Bovine), this protein is MOB kinase activator 3A (MOB3A).